The following is a 434-amino-acid chain: 3-phosphoshikimate 1-carboxyvinyltransferase (434 aa).

3 residues coordinate 3-phosphoshikimate: Lys22, Ser23, and Arg27. Lys22 serves as a coordination point for phosphoenolpyruvate. 2 residues coordinate phosphoenolpyruvate: Gly93 and Arg121. Ser168, Ser169, Gln170, Ser199, Asp320, and Lys347 together coordinate 3-phosphoshikimate. Phosphoenolpyruvate is bound at residue Gln170. Asp320 serves as the catalytic Proton acceptor. Phosphoenolpyruvate contacts are provided by Arg351, Arg394, and Lys419.

It belongs to the EPSP synthase family. As to quaternary structure, monomer.

The protein localises to the cytoplasm. It carries out the reaction 3-phosphoshikimate + phosphoenolpyruvate = 5-O-(1-carboxyvinyl)-3-phosphoshikimate + phosphate. The protein operates within metabolic intermediate biosynthesis; chorismate biosynthesis; chorismate from D-erythrose 4-phosphate and phosphoenolpyruvate: step 6/7. In terms of biological role, catalyzes the transfer of the enolpyruvyl moiety of phosphoenolpyruvate (PEP) to the 5-hydroxyl of shikimate-3-phosphate (S3P) to produce enolpyruvyl shikimate-3-phosphate and inorganic phosphate. This chain is 3-phosphoshikimate 1-carboxyvinyltransferase, found in Burkholderia vietnamiensis (strain G4 / LMG 22486) (Burkholderia cepacia (strain R1808)).